The following is a 132-amino-acid chain: Ribosome-binding factor A (132 aa).

It belongs to the RbfA family. As to quaternary structure, monomer. Binds 30S ribosomal subunits, but not 50S ribosomal subunits or 70S ribosomes.

It is found in the cytoplasm. In terms of biological role, one of several proteins that assist in the late maturation steps of the functional core of the 30S ribosomal subunit. Associates with free 30S ribosomal subunits (but not with 30S subunits that are part of 70S ribosomes or polysomes). Required for efficient processing of 16S rRNA. May interact with the 5'-terminal helix region of 16S rRNA. This chain is Ribosome-binding factor A, found in Pasteurella multocida (strain Pm70).